Here is a 118-residue protein sequence, read N- to C-terminus: DNA mimic protein DMP12 (118 aa).

Belongs to the DMP12-like protein family. In terms of assembly, monomer. Interacts with the dimeric form of the DNA-binding protein HU.

Acts as a DNA mimic. Interacts with the DNA-binding protein HU and partially prevents the binding of HU protein to DNA by occupying the DNA binding sites on the protein. However, the relatively weak affinity of DMP12 for HU suggests that it may not completely block the HU protein-DNA binding, and that DMP12 is more likely to act as a regulator than a competitive inhibitor. It protects HU protein from limited digestion by trypsin in a limited trypsin digestion assay, suggesting that it may serve to protect the HU protein and improve the stability of unbound HU protein. The sequence is that of DNA mimic protein DMP12 from Neisseria meningitidis serogroup B (strain ATCC BAA-335 / MC58).